An 894-amino-acid polypeptide reads, in one-letter code: GTPase-activating protein GYP5 (894 aa).

The segment covering 1–23 (MSSDKSIEKNTDTIASEVHEGDN) has biased composition (basic and acidic residues). A disordered region spans residues 1–324 (MSSDKSIEKN…VPPPLEEEMK (324 aa)). A phosphoserine mark is found at S25 and S30. A Phosphothreonine modification is found at T89. The segment covering 134–164 (IEKEYDAVKENEKVYADTKEVVSSPENREVT) has biased composition (basic and acidic residues). 2 stretches are compositionally biased toward polar residues: residues 184–200 (GTTTAANANDISISSEV) and 268–279 (SSENEVSAIPTT). S389 is subject to Phosphoserine. A Rab-GAP TBC domain is found at 451-630 (GIPPQIRGII…RIFDIVFVEG (180 aa)). The stretch at 732–872 (EKEQKKEDHY…INKEQVSTAS (141 aa)) forms a coiled coil.

The protein belongs to the GYP5 family. Interacts with GYL1 and RVS167; and is part of SEC4-containing complexes.

Its subcellular location is the cytoplasm. It is found in the bud. It localises to the bud neck. In terms of biological role, GTPase-activating protein which accelerates the GTP hydrolysis rate of YPT1 and SEC4. Involved in ER to Golgi trafficking and polarized exocytosis. This Saccharomyces cerevisiae (strain ATCC 204508 / S288c) (Baker's yeast) protein is GTPase-activating protein GYP5 (GYP5).